Reading from the N-terminus, the 237-residue chain is 4-hydroxy-tetrahydrodipicolinate reductase (237 aa).

NAD(+) is bound by residues 11–16 (GASGRM), 92–94 (GTT), and 116–119 (GSNF). The active-site Proton donor/acceptor is His148. His149 serves as a coordination point for (S)-2,3,4,5-tetrahydrodipicolinate. Lys152 functions as the Proton donor in the catalytic mechanism. 158 to 159 (GS) lines the (S)-2,3,4,5-tetrahydrodipicolinate pocket.

It belongs to the DapB family.

The protein resides in the cytoplasm. It carries out the reaction (S)-2,3,4,5-tetrahydrodipicolinate + NAD(+) + H2O = (2S,4S)-4-hydroxy-2,3,4,5-tetrahydrodipicolinate + NADH + H(+). The catalysed reaction is (S)-2,3,4,5-tetrahydrodipicolinate + NADP(+) + H2O = (2S,4S)-4-hydroxy-2,3,4,5-tetrahydrodipicolinate + NADPH + H(+). The protein operates within amino-acid biosynthesis; L-lysine biosynthesis via DAP pathway; (S)-tetrahydrodipicolinate from L-aspartate: step 4/4. Functionally, catalyzes the conversion of 4-hydroxy-tetrahydrodipicolinate (HTPA) to tetrahydrodipicolinate. This Xylella fastidiosa (strain 9a5c) protein is 4-hydroxy-tetrahydrodipicolinate reductase.